Here is a 284-residue protein sequence, read N- to C-terminus: UPF0294 protein VV2535 (284 aa).

The protein belongs to the UPF0294 family.

The protein localises to the cytoplasm. This Vibrio vulnificus (strain YJ016) protein is UPF0294 protein VV2535.